We begin with the raw amino-acid sequence, 156 residues long: Cell division protein SepF (156 aa).

Residues 20–36 (AQYGYEKEQTDMKKQQD) are compositionally biased toward basic and acidic residues. Residues 20–50 (AQYGYEKEQTDMKKQQDPPEQQDVTFPKAQP) form a disordered region.

It belongs to the SepF family. Homodimer. Interacts with FtsZ.

It localises to the cytoplasm. In terms of biological role, cell division protein that is part of the divisome complex and is recruited early to the Z-ring. Probably stimulates Z-ring formation, perhaps through the cross-linking of FtsZ protofilaments. Its function overlaps with FtsA. The polypeptide is Cell division protein SepF (Bacillus cereus (strain G9842)).